The sequence spans 709 residues: MLNFFAAAPKGFEYSLAQELTEFGATEVKESVAGVYFTASLTLAYRITLWTRLASRIVLVIYKGSCESAEQLYNAAYCVDWPAHFSNKSTFSIDFHGTGGFLNNTQFGALKIKDAIVDRFRDDDIERPNVSRVDAEFKVDAHFRNGVITIAMNFSGPSLHQRGYRSTTGEAPLKENLAANMLVRSGWQASPSTLLDPFCGSGTVLIEAALMAADIAPGLQRSRFGFEHWRRHDKAVWQEIVEEAKARASLGVKRCEIKFYGSDIDSRLVALAKRNAENAGVLELIEFNVADALTIAPPAESGYLITNPPYGERLGNVSELLQLYYQLGDKFKKEFGGWKVAMLCSDIELVSSLKLKADKQMKMFNGALECAFNIYTLHANSTRRDTPVLPDGVDIADIAPAFANRIKKNAKLLEKWAKKEGIDSYRIYDADIPEYNVAVDKYLDYVIIQEYMAPATIPEAVTKRRLSDVLLALPSAIGINPNKMIMKTRERQKGTSQYQKLDERKLELITTEYGAKFKLNLTGYLDTGLFLDHRLTRRLVGQKSKGRRVLNLFSYTGSASVHAALGGAKSVTTVDMSNTYIAWAKDNFALNGLQGKQYEFVQSDCMQWIRDCNEQYDLIFIDPPTFSNSKRMEDSFDVQRDHVNLLSSLVKLLSPTGELVFSNNKRKFKMDIETLTKMNINVTNIDDVTLPMDYKRNPHIHNTWLITHA.

The THUMP domain occupies 43 to 154 (LAYRITLWTR…NGVITIAMNF (112 aa)).

This sequence belongs to the methyltransferase superfamily. RlmKL family.

It localises to the cytoplasm. The enzyme catalyses guanosine(2445) in 23S rRNA + S-adenosyl-L-methionine = N(2)-methylguanosine(2445) in 23S rRNA + S-adenosyl-L-homocysteine + H(+). It catalyses the reaction guanosine(2069) in 23S rRNA + S-adenosyl-L-methionine = N(2)-methylguanosine(2069) in 23S rRNA + S-adenosyl-L-homocysteine + H(+). Its function is as follows. Specifically methylates the guanine in position 2445 (m2G2445) and the guanine in position 2069 (m7G2069) of 23S rRNA. The sequence is that of Ribosomal RNA large subunit methyltransferase K/L from Shewanella baltica (strain OS155 / ATCC BAA-1091).